Here is a 57-residue protein sequence, read N- to C-terminus: Small ribosomal subunit protein bS21B (57 aa).

A disordered region spans residues Arg37–Arg57. The segment covering Ala43–Arg57 has biased composition (basic residues).

The protein belongs to the bacterial ribosomal protein bS21 family.

In Gloeobacter violaceus (strain ATCC 29082 / PCC 7421), this protein is Small ribosomal subunit protein bS21B.